We begin with the raw amino-acid sequence, 249 residues long: Enolase-phosphatase E1 (249 aa).

Residues Asp-14 and Glu-16 each contribute to the Mg(2+) site. Residues 141 to 142 (SS) and Lys-175 each bind substrate. Asp-200 is a binding site for Mg(2+).

It belongs to the HAD-like hydrolase superfamily. MasA/MtnC family. As to quaternary structure, monomer. It depends on Mg(2+) as a cofactor.

The protein resides in the cytoplasm. Its subcellular location is the nucleus. It catalyses the reaction 5-methylsulfanyl-2,3-dioxopentyl phosphate + H2O = 1,2-dihydroxy-5-(methylsulfanyl)pent-1-en-3-one + phosphate. Its pathway is amino-acid biosynthesis; L-methionine biosynthesis via salvage pathway; L-methionine from S-methyl-5-thio-alpha-D-ribose 1-phosphate: step 3/6. It functions in the pathway amino-acid biosynthesis; L-methionine biosynthesis via salvage pathway; L-methionine from S-methyl-5-thio-alpha-D-ribose 1-phosphate: step 4/6. Bifunctional enzyme that catalyzes the enolization of 2,3-diketo-5-methylthiopentyl-1-phosphate (DK-MTP-1-P) into the intermediate 2-hydroxy-3-keto-5-methylthiopentenyl-1-phosphate (HK-MTPenyl-1-P), which is then dephosphorylated to form the acireductone 1,2-dihydroxy-3-keto-5-methylthiopentene (DHK-MTPene). The protein is Enolase-phosphatase E1 of Drosophila mojavensis (Fruit fly).